We begin with the raw amino-acid sequence, 236 residues long: Ubiquinone biosynthesis O-methyltransferase (236 aa).

4 residues coordinate S-adenosyl-L-methionine: R39, G59, D80, and M124.

The protein belongs to the methyltransferase superfamily. UbiG/COQ3 family.

It carries out the reaction a 3-demethylubiquinol + S-adenosyl-L-methionine = a ubiquinol + S-adenosyl-L-homocysteine + H(+). It catalyses the reaction a 3-(all-trans-polyprenyl)benzene-1,2-diol + S-adenosyl-L-methionine = a 2-methoxy-6-(all-trans-polyprenyl)phenol + S-adenosyl-L-homocysteine + H(+). It participates in cofactor biosynthesis; ubiquinone biosynthesis. Its function is as follows. O-methyltransferase that catalyzes the 2 O-methylation steps in the ubiquinone biosynthetic pathway. The polypeptide is Ubiquinone biosynthesis O-methyltransferase (Pseudoalteromonas translucida (strain TAC 125)).